We begin with the raw amino-acid sequence, 509 residues long: GRAS family protein RAD1 (509 aa).

Residues 125-508 (EDGCADGMRL…KPIVAASCWK (384 aa)) enclose the GRAS domain. The interval 132–198 (MRLVQLLIAC…IQPIGSGAGV (67 aa)) is leucine repeat I (LRI). Residues 217–286 (YRLVYETCPH…SGHGRVRRLR (70 aa)) are VHIID. The VHIID motif lies at 248–252 (VHVVD). Positions 299–331 (AIGDELSDYANNLGINLEFSVVQKNLENLQPED) are leucine repeat II (LRII). Positions 340–431 (LVVNSILQLH…QFYFAEEIKN (92 aa)) are PFYRE. The interval 434–508 (SCEGPLRMER…KPIVAASCWK (75 aa)) is SAW.

Belongs to the GRAS family. Interacts with RAM1 and NSP2. Expressed in roots under low phosphate (Pi) conditions.

The protein localises to the nucleus. Transcription factor acting as a regulator of arbuscular mycorrhiza (AM)-related genes (e.g. PT4, STR and RAM2). Required for the morphogenesis of arbuscules upon symbiosis with AM fungi (e.g. Rhizophagus irregularis). Also involved in restricting mycorrhizal colonization of the root meristem. The polypeptide is GRAS family protein RAD1 (Lotus japonicus (Lotus corniculatus var. japonicus)).